The chain runs to 112 residues: MATPFIAGVAVAATALAGRYGIQAWQAFKARPPRPKIKKFYEGGFQPTMTKREAALILGVRESVAAEKVKEAHRKVMVANHPDAGGSHFLASKINEAKDVMLGKTKNSGSAF.

At Ala-2 the chain carries N-acetylalanine. Residues 7-23 traverse the membrane as a helical segment; it reads AGVAVAATALAGRYGIQ. The J domain occupies 53-112; it reads EAALILGVRESVAAEKVKEAHRKVMVANHPDAGGSHFLASKINEAKDVMLGKTKNSGSAF.

This sequence belongs to the TIM14 family. As to quaternary structure, probable component of the PAM complex at least composed of a mitochondrial HSP70 protein, TIMM44 and TIMM14. The complex interacts with the TIMM23 component of the TIM17:23 complex.

It is found in the mitochondrion. Its subcellular location is the mitochondrion inner membrane. Functionally, component of the PAM complex, a complex required for the translocation of transit peptide-containing proteins from the inner membrane into the mitochondrial matrix in an ATP-dependent manner. The protein is Mitochondrial import inner membrane translocase subunit TIM14-1 (TIM14-1) of Arabidopsis thaliana (Mouse-ear cress).